A 244-amino-acid chain; its full sequence is T-cell immunoreceptor with Ig and ITIM domains (244 aa).

Residues 1 to 21 (MRWCLLLIWAQGLRQAPLASG) form the signal peptide. The 103-residue stretch at 22–124 (MMTGTIETTG…DGTYTGRIFL (103 aa)) folds into the Ig-like V-type domain. Residues 22–141 (MMTGTIETTG…AEHGARFQIP (120 aa)) are Extracellular-facing. Residues Asn-32 and Asn-101 are each glycosylated (N-linked (GlcNAc...) asparagine). The interval 32–42 (NISAEKGGSII) is homodimerization. Cys-45 and Cys-108 are oxidised to a cystine. Residues 142–162 (LLGAMAATLVVICTAVIVVVA) form a helical membrane-spanning segment. The Cytoplasmic segment spans residues 163–244 (LTRKKKALRI…GNCSFFTETG (82 aa)). Tyr-225 carries the post-translational modification Phosphotyrosine. The short motif at 229–234 (LSYRSL) is the ITIM motif element.

As to quaternary structure, homodimer in cis; binds with high affinity to PVR, forming a heterotetrameric assembly of two TIGIT and two PVR molecules. Binds with lower affinity to NECTIN2 and NECTIN3. Interacts with GRB2. Interacts with NECTIN4. In terms of tissue distribution, expressed at low levels on peripheral memory and regulatory CD4+ T-cells and NK cells and is up-regulated following activation of these cells (at protein level).

It is found in the cell membrane. Its function is as follows. Inhibitory receptor that plays a role in the modulation of immune responses. Suppresses T-cell activation by promoting the generation of mature immunoregulatory dendritic cells. Upon binding to its ligands PVR/CD155 or NECTIN2/CD112, which are expressed on antigen-presenting cells, sends inhibitory signals to the T-cell or NK cell. Mechanistically, interaction with ligand leads to phosphorylation of the cytoplasmic tail by Src family tyrosine kinases such as FYN or LCK, allowing subsequent binding to adapter GRB2 and SHIP1/INPP5D. In turn, inhibits PI3K and MAPK signaling cascades. In addition, associates with beta-arrestin-2/ARRB2 to recruit SHIP1/INPP5D that suppresses autoubiquitination of TRAF6 and subsequently inhibits NF-kappa-B signaling pathway. Also acts as a receptor for NECTIN4 to inhibit NK cell cytotoxicity. This Homo sapiens (Human) protein is T-cell immunoreceptor with Ig and ITIM domains (TIGIT).